A 391-amino-acid polypeptide reads, in one-letter code: Probable tRNA sulfurtransferase (391 aa).

One can recognise a THUMP domain in the interval 60–167; it reads DETVAALQRV…NKAYVYSNTL (108 aa). ATP contacts are provided by residues 184–185, 209–210, Arg266, Gly288, and Gln297; these read LL and YF.

The protein belongs to the ThiI family.

The protein resides in the cytoplasm. The enzyme catalyses [ThiI sulfur-carrier protein]-S-sulfanyl-L-cysteine + a uridine in tRNA + 2 reduced [2Fe-2S]-[ferredoxin] + ATP + H(+) = [ThiI sulfur-carrier protein]-L-cysteine + a 4-thiouridine in tRNA + 2 oxidized [2Fe-2S]-[ferredoxin] + AMP + diphosphate. It catalyses the reaction [ThiS sulfur-carrier protein]-C-terminal Gly-Gly-AMP + S-sulfanyl-L-cysteinyl-[cysteine desulfurase] + AH2 = [ThiS sulfur-carrier protein]-C-terminal-Gly-aminoethanethioate + L-cysteinyl-[cysteine desulfurase] + A + AMP + 2 H(+). Its pathway is cofactor biosynthesis; thiamine diphosphate biosynthesis. Its function is as follows. Catalyzes the ATP-dependent transfer of a sulfur to tRNA to produce 4-thiouridine in position 8 of tRNAs, which functions as a near-UV photosensor. Also catalyzes the transfer of sulfur to the sulfur carrier protein ThiS, forming ThiS-thiocarboxylate. This is a step in the synthesis of thiazole, in the thiamine biosynthesis pathway. The sulfur is donated as persulfide by IscS. The protein is Probable tRNA sulfurtransferase of Lachnoclostridium phytofermentans (strain ATCC 700394 / DSM 18823 / ISDg) (Clostridium phytofermentans).